A 178-amino-acid chain; its full sequence is Fluoride-specific ion channel FluC 2 (178 aa).

4 helical membrane-spanning segments follow: residues 25–45, 63–83, 97–117, and 129–149; these read PDIHLDIVLVVFCGGAIGTAI, FVANMLACFCYAGLTAYLAGA, GLGMGVCGGLSTMSTLALEGF, and IAYLLVTFALGLVCASAGVWA. Glycine 104 and serine 107 together coordinate Na(+).

This sequence belongs to the fluoride channel Fluc/FEX (TC 1.A.43) family.

It localises to the cell membrane. The enzyme catalyses fluoride(in) = fluoride(out). Na(+) is not transported, but it plays an essential structural role and its presence is essential for fluoride channel function. Its function is as follows. Fluoride-specific ion channel. Important for reducing fluoride concentration in the cell, thus reducing its toxicity. The chain is Fluoride-specific ion channel FluC 2 from Bifidobacterium longum (strain NCC 2705).